Reading from the N-terminus, the 505-residue chain is Poxin-Schlafen (505 aa).

Positions methionine 1–leucine 238 are poxin-like. Histidine 17 serves as the catalytic Proton donor. The active-site Shared with catalytic histidine of dimeric partner is tyrosine 138. Lysine 142 serves as the catalytic Proton acceptor; shared with catalytic histidine of dimeric partner. The segment at methionine 239–phenylalanine 505 is schlafen-like.

In the N-terminal section; belongs to the poxin family. It in the C-terminal section; belongs to the Schlafen protein family. Subgroup poxviridae B3 subfamily. As to quaternary structure, homodimer.

The enzyme catalyses 2',3'-cGAMP + H2O = Gp(2'-5')Ap(3') + H(+). Functionally, nuclease that is responsible for viral evasion of host cGAS-STING innate immunity. Cleaves 2',3'-cGAMP which is produced by host cGAS following recognition of cytosolic DNA and blocks the subsequent 2',3'-cGAMP-mediated activation of TMEM173/STING, which normally spreads to adjacent cells and activates the interferon and NF-kappa-B immune responses. This chain is Poxin-Schlafen (OPG188), found in Bos taurus (Bovine).